Reading from the N-terminus, the 56-residue chain is Small ribosomal subunit protein uS14 (56 aa).

C21, C24, C39, and C42 together coordinate Zn(2+).

This sequence belongs to the universal ribosomal protein uS14 family. In terms of assembly, component of the 40S small ribosomal subunit. It depends on Zn(2+) as a cofactor.

The protein resides in the cytoplasm. It localises to the cytosol. Its subcellular location is the rough endoplasmic reticulum. The protein is Small ribosomal subunit protein uS14 (RpS29) of Bombyx mori (Silk moth).